Consider the following 434-residue polypeptide: DNA primase DnaG (434 aa).

A Toprim domain is found at 171 to 250 (DAIIIVEGRA…AFSPRRRSVE (80 aa)). The Mg(2+) site is built by Glu-177, Asp-219, and Asp-221. The interval 290–319 (GEEEHSSVSQKEEGNNTTPDVPADLPEEPP) is disordered. Positions 292 to 303 (EEHSSVSQKEEG) are enriched in basic and acidic residues.

It belongs to the archaeal DnaG primase family. Forms a ternary complex with MCM helicase and DNA. Mg(2+) serves as cofactor.

It catalyses the reaction ssDNA + n NTP = ssDNA/pppN(pN)n-1 hybrid + (n-1) diphosphate.. RNA polymerase that catalyzes the synthesis of short RNA molecules used as primers for DNA polymerase during DNA replication. The polypeptide is DNA primase DnaG (Methanocorpusculum labreanum (strain ATCC 43576 / DSM 4855 / Z)).